The chain runs to 155 residues: 3-dehydroquinate dehydratase (155 aa).

Y22 serves as the catalytic Proton acceptor. The substrate site is built by N73, H79, and D86. H99 functions as the Proton donor in the catalytic mechanism. Substrate contacts are provided by residues I100 to S101 and R110.

It belongs to the type-II 3-dehydroquinase family. As to quaternary structure, homododecamer.

The enzyme catalyses 3-dehydroquinate = 3-dehydroshikimate + H2O. It functions in the pathway metabolic intermediate biosynthesis; chorismate biosynthesis; chorismate from D-erythrose 4-phosphate and phosphoenolpyruvate: step 3/7. Catalyzes a trans-dehydration via an enolate intermediate. The protein is 3-dehydroquinate dehydratase of Campylobacter hominis (strain ATCC BAA-381 / DSM 21671 / CCUG 45161 / LMG 19568 / NCTC 13146 / CH001A).